Reading from the N-terminus, the 354-residue chain is Biotin synthase (354 aa).

A Radical SAM core domain is found at 40–258; it reads NEVQVSTLLS…IAVARILMPR (219 aa). Residues C55, C59, and C62 each coordinate [4Fe-4S] cluster. 4 residues coordinate [2Fe-2S] cluster: C99, C130, C190, and R262.

It belongs to the radical SAM superfamily. Biotin synthase family. Homodimer. It depends on [4Fe-4S] cluster as a cofactor. Requires [2Fe-2S] cluster as cofactor.

It catalyses the reaction (4R,5S)-dethiobiotin + (sulfur carrier)-SH + 2 reduced [2Fe-2S]-[ferredoxin] + 2 S-adenosyl-L-methionine = (sulfur carrier)-H + biotin + 2 5'-deoxyadenosine + 2 L-methionine + 2 oxidized [2Fe-2S]-[ferredoxin]. It functions in the pathway cofactor biosynthesis; biotin biosynthesis; biotin from 7,8-diaminononanoate: step 2/2. Its function is as follows. Catalyzes the conversion of dethiobiotin (DTB) to biotin by the insertion of a sulfur atom into dethiobiotin via a radical-based mechanism. The polypeptide is Biotin synthase (Hahella chejuensis (strain KCTC 2396)).